The primary structure comprises 484 residues: tRNA sulfurtransferase (484 aa).

The 105-residue stretch at 63–167 (QAFGERLACI…GDKLYMVTKR (105 aa)) folds into the THUMP domain. Residues 185 to 186 (LI), Lys267, Gly289, and Gln298 each bind ATP. An intrachain disulfide couples Cys346 to Cys458. The Rhodanese domain occupies 406–484 (IDTNEVVIDI…GYHNVKVYRP (79 aa)). The active-site Cysteine persulfide intermediate is Cys458.

It belongs to the ThiI family.

It is found in the cytoplasm. The enzyme catalyses [ThiI sulfur-carrier protein]-S-sulfanyl-L-cysteine + a uridine in tRNA + 2 reduced [2Fe-2S]-[ferredoxin] + ATP + H(+) = [ThiI sulfur-carrier protein]-L-cysteine + a 4-thiouridine in tRNA + 2 oxidized [2Fe-2S]-[ferredoxin] + AMP + diphosphate. It catalyses the reaction [ThiS sulfur-carrier protein]-C-terminal Gly-Gly-AMP + S-sulfanyl-L-cysteinyl-[cysteine desulfurase] + AH2 = [ThiS sulfur-carrier protein]-C-terminal-Gly-aminoethanethioate + L-cysteinyl-[cysteine desulfurase] + A + AMP + 2 H(+). Its pathway is cofactor biosynthesis; thiamine diphosphate biosynthesis. Functionally, catalyzes the ATP-dependent transfer of a sulfur to tRNA to produce 4-thiouridine in position 8 of tRNAs, which functions as a near-UV photosensor. Also catalyzes the transfer of sulfur to the sulfur carrier protein ThiS, forming ThiS-thiocarboxylate. This is a step in the synthesis of thiazole, in the thiamine biosynthesis pathway. The sulfur is donated as persulfide by IscS. This is tRNA sulfurtransferase from Shewanella sp. (strain MR-7).